The following is a 380-amino-acid chain: MRMQTKLIHGGINEDATTGAVSVPIYQTSTYRQDAIGRHKGYEYSRSGNPTRFALEELIADLEGGVKGFAFASGLAGIHAVFSLLQSGDHVLLGDDVYGGNFRLFNKVLVKNGLSCTIIDTSDLSQIKKAIKPNTKALYLETPSNPLLKITDLAQCASVAKEHNLLTIVDNTFATPYCQNPLLLGTDIVAHNGTKYLGGHSDVVAGLVTTNNEALAQEFDFFQNAIGGVLGLQDSWLLQRGIKTLGLRMEAHQKNALCVAEFLEKHPKVERVYYPGLPTHPNHELAKAQMRGFSGMFSFTLKNDSEAVAFVESLKLFILGESLGGVESLVGIPALMTHACIPKAQREAAGIRDGLVRLSVGIEHEQDLLEDLDQAFAKIS.

The residue at position 195 (Lys-195) is an N6-(pyridoxal phosphate)lysine.

It belongs to the trans-sulfuration enzymes family. Homotetramer. Pyridoxal 5'-phosphate serves as cofactor.

It localises to the cytoplasm. The enzyme catalyses O-succinyl-L-homoserine + L-cysteine = L,L-cystathionine + succinate + H(+). Functionally, catalyzes the formation of L-cystathionine from O-succinyl-L-homoserine (OSHS) and L-cysteine, via a gamma-replacement reaction. In the absence of thiol, catalyzes gamma-elimination to form 2-oxobutanoate, succinate and ammonia. The protein is Cystathionine gamma-synthase (metB) of Helicobacter pylori (strain J99 / ATCC 700824) (Campylobacter pylori J99).